A 160-amino-acid chain; its full sequence is uncharacterized protein (160 aa).

Zn(2+) is bound by residues Cys26, Cys28, Cys50, and His61. A GRF-type; atypical zinc finger spans residues Cys26–Ala69.

This is an uncharacterized protein from Arabidopsis thaliana (Mouse-ear cress).